The primary structure comprises 476 residues: Variant surface glycoprotein MITAT 1.2 (476 aa).

A signal peptide spans 1–26 (MPSNQEARLFLAVLVLAQVLPILVDS). 2 disulfide bridges follow: Cys41–Cys171 and Cys149–Cys213. Asn289 is a glycosylation site (N-linked (GlcNAc...) asparagine). Disordered stretches follow at residues 389–418 (QKHK…CKSP) and 435–459 (EEAK…TGSS). Disulfide bonds link Cys407–Cys419 and Cys415–Cys430. The span at 435-449 (EEAKKVADETAKDGK) shows a compositional bias: basic and acidic residues. The segment covering 450 to 459 (TGNTNTTGSS) has biased composition (low complexity). Asn454 carries an N-linked (GlcNAc...) asparagine glycan. Residue Ser459 is the site of GPI-anchor amidated serine attachment. A propeptide spans 460–476 (NSFVISKTPLWLAVLLF) (removed in mature form).

In terms of assembly, homodimer.

It localises to the cell membrane. Functionally, VSG forms a coat on the surface of the parasite. The trypanosome evades the immune response of the host by expressing a series of antigenically distinct VSGs from an estimated 1000 VSG genes. The sequence is that of Variant surface glycoprotein MITAT 1.2 from Trypanosoma brucei brucei.